Reading from the N-terminus, the 356-residue chain is Chorismate synthase (356 aa).

R44 serves as a coordination point for NADP(+). FMN contacts are provided by residues 121-123 (HFS), G278, 293-297 (KPTPS), and R320.

The protein belongs to the chorismate synthase family. The cofactor is FMNH2.

It carries out the reaction 5-O-(1-carboxyvinyl)-3-phosphoshikimate = chorismate + phosphate. The protein operates within metabolic intermediate biosynthesis; chorismate biosynthesis; chorismate from D-erythrose 4-phosphate and phosphoenolpyruvate: step 7/7. Its function is as follows. Catalyzes the anti-1,4-elimination of the C-3 phosphate and the C-6 proR hydrogen from 5-enolpyruvylshikimate-3-phosphate (EPSP) to yield chorismate, which is the branch point compound that serves as the starting substrate for the three terminal pathways of aromatic amino acid biosynthesis. This reaction introduces a second double bond into the aromatic ring system. This chain is Chorismate synthase, found in Pyrococcus abyssi (strain GE5 / Orsay).